We begin with the raw amino-acid sequence, 425 residues long: Dihydroorotase (425 aa).

His58 and His60 together coordinate Zn(2+). Residues 60 to 62 (HFR) and Asn92 contribute to the substrate site. Zn(2+) contacts are provided by Asp150, His177, and His230. Position 276 (Asn276) interacts with substrate. Zn(2+) is bound at residue Asp303. Residue Asp303 is part of the active site. Substrate-binding positions include His307 and 321–322 (FG).

This sequence belongs to the metallo-dependent hydrolases superfamily. DHOase family. Class I DHOase subfamily. Zn(2+) serves as cofactor.

The enzyme catalyses (S)-dihydroorotate + H2O = N-carbamoyl-L-aspartate + H(+). Its pathway is pyrimidine metabolism; UMP biosynthesis via de novo pathway; (S)-dihydroorotate from bicarbonate: step 3/3. Catalyzes the reversible cyclization of carbamoyl aspartate to dihydroorotate. The chain is Dihydroorotase from Pediococcus pentosaceus (strain ATCC 25745 / CCUG 21536 / LMG 10740 / 183-1w).